The sequence spans 245 residues: Keratin-associated protein 10-12 (245 aa).

19 repeat units span residues 36–40, 41–45, 62–66, 84–88, 94–98, 104–108, 109–113, 114–118, 119–123, 124–128, 131–135, 141–145, 151–155, 156–160, 161–165, 173–177, 183–187, 188–192, and 214–218. A 19 X 5 AA repeats of C-C-X(3) region spans residues 36-218; the sequence is CCEPPCCAPA…VPVPSCCVPT (183 aa).

The protein belongs to the KRTAP type 10 family. As to quaternary structure, interacts with hair keratins. Restricted to a narrow region of the hair fiber cuticle, lying approximately 20 cell layers above the apex of the dermal papilla of the hair root; not detected in any other tissues.

Its function is as follows. In the hair cortex, hair keratin intermediate filaments are embedded in an interfilamentous matrix, consisting of hair keratin-associated proteins (KRTAP), which are essential for the formation of a rigid and resistant hair shaft through their extensive disulfide bond cross-linking with abundant cysteine residues of hair keratins. The matrix proteins include the high-sulfur and high-glycine-tyrosine keratins. In Homo sapiens (Human), this protein is Keratin-associated protein 10-12 (KRTAP10-12).